The primary structure comprises 397 residues: S-adenosylmethionine:tRNA ribosyltransferase-isomerase (397 aa).

The protein belongs to the QueA family. Monomer.

It is found in the cytoplasm. It carries out the reaction 7-aminomethyl-7-carbaguanosine(34) in tRNA + S-adenosyl-L-methionine = epoxyqueuosine(34) in tRNA + adenine + L-methionine + 2 H(+). The protein operates within tRNA modification; tRNA-queuosine biosynthesis. Its function is as follows. Transfers and isomerizes the ribose moiety from AdoMet to the 7-aminomethyl group of 7-deazaguanine (preQ1-tRNA) to give epoxyqueuosine (oQ-tRNA). The polypeptide is S-adenosylmethionine:tRNA ribosyltransferase-isomerase (Nostoc sp. (strain PCC 7120 / SAG 25.82 / UTEX 2576)).